Here is a 198-residue protein sequence, read N- to C-terminus: Elongation factor Ts (198 aa).

The segment at Thr81 to Val84 is involved in Mg(2+) ion dislocation from EF-Tu.

This sequence belongs to the EF-Ts family.

It localises to the cytoplasm. In terms of biological role, associates with the EF-Tu.GDP complex and induces the exchange of GDP to GTP. It remains bound to the aminoacyl-tRNA.EF-Tu.GTP complex up to the GTP hydrolysis stage on the ribosome. The protein is Elongation factor Ts of Pseudothermotoga lettingae (strain ATCC BAA-301 / DSM 14385 / NBRC 107922 / TMO) (Thermotoga lettingae).